A 343-amino-acid polypeptide reads, in one-letter code: L-lysine cyclodeaminase (343 aa).

This sequence belongs to the ornithine cyclodeaminase/mu-crystallin family. It depends on NAD(+) as a cofactor.

It catalyses the reaction L-lysine = L-pipecolate + NH4(+). It functions in the pathway antibiotic biosynthesis. Its activity is regulated as follows. Inhibited by nipecotic acid and thiazolidine-2-carboxylic acid. Its function is as follows. Converts L-lysine to L-pipecolate, which is incorporated into multiple secondary metabolite products, including rapamycin, tobulysin, virginiamycin and pristinamycin. The protein is L-lysine cyclodeaminase (rapL) of Streptomyces rapamycinicus (strain ATCC 29253 / DSM 41530 / NRRL 5491 / AYB-994) (Streptomyces hygroscopicus (strain ATCC 29253)).